The primary structure comprises 178 residues: uncharacterized protein (178 aa).

Positions 64 to 103 (GVSDNTNKTTAKDNVSDKSSENEVAQPKQVTPPVDATGNT) are disordered. The span at 73–84 (TAKDNVSDKSSE) shows a compositional bias: basic and acidic residues.

This is an uncharacterized protein from Acidianus sp. F28 (AFV-2).